Here is a 379-residue protein sequence, read N- to C-terminus: L-demethylnoviosyl transferase (379 aa).

The protein belongs to the glycosyltransferase 28 family.

It carries out the reaction dTDP-4-O-demethyl-beta-L-noviose + novobiocic acid = desmethyldescarbamoylnovobiocin + dTDP + H(+). It participates in antibiotic biosynthesis; novobiocin biosynthesis. With respect to regulation, inhibited by TDP-L-rhamnose, the sugar donor that most closely structurally resembles the natural substrate dTDP-beta-L-noviose. Catalyzes the transfer of L-noviose from dTDP-4-O-demethyl-beta-L-noviose to the phenolic oxygen of novobiocic acid, creating the full ABC ring system in the novobiocin biosynthesis pathway. Novobiocin is an aminocoumarin family antibiotic that targets bacterial DNA gyrases. Also shows activity with variant coumarin aglycones, suggesting it may be a promiscuous catalyst for noviosylation of a range of planar scaffolds. Does not show activity with TDP-L-rhamnose. This Streptomyces niveus (Streptomyces spheroides) protein is L-demethylnoviosyl transferase (novM).